The following is a 199-amino-acid chain: Shikimate kinase (199 aa).

Residue glycine 14 to threonine 19 coordinates ATP. Mg(2+) is bound at residue serine 18. Positions 36, 60, and 82 each coordinate substrate. Residue arginine 120 participates in ATP binding. A substrate-binding site is contributed by arginine 147.

It belongs to the shikimate kinase family. In terms of assembly, monomer. Mg(2+) serves as cofactor.

The protein localises to the cytoplasm. It catalyses the reaction shikimate + ATP = 3-phosphoshikimate + ADP + H(+). It functions in the pathway metabolic intermediate biosynthesis; chorismate biosynthesis; chorismate from D-erythrose 4-phosphate and phosphoenolpyruvate: step 5/7. Functionally, catalyzes the specific phosphorylation of the 3-hydroxyl group of shikimic acid using ATP as a cosubstrate. This chain is Shikimate kinase, found in Chlorobium limicola (strain DSM 245 / NBRC 103803 / 6330).